Consider the following 185-residue polypeptide: MISVNDFKTGLTISVDNGIWKVLDFQHVKPGKGSAFVRSKLRNLRTGAIQEKTFRGGEKVETALIENRRMQYLYADGDTHVFMDNQTFEQTELPADYLEYELNFLKANMEVQIQSYENETLGVELPKTVELTVTETEPGIKGDTANGATKSATVETGYTLNVPLFVNEGDVLVINTGDGSYISRA.

Belongs to the elongation factor P family.

Its subcellular location is the cytoplasm. Its pathway is protein biosynthesis; polypeptide chain elongation. In terms of biological role, involved in peptide bond synthesis. Stimulates efficient translation and peptide-bond synthesis on native or reconstituted 70S ribosomes in vitro. Probably functions indirectly by altering the affinity of the ribosome for aminoacyl-tRNA, thus increasing their reactivity as acceptors for peptidyl transferase. In Staphylococcus saprophyticus subsp. saprophyticus (strain ATCC 15305 / DSM 20229 / NCIMB 8711 / NCTC 7292 / S-41), this protein is Elongation factor P.